Consider the following 442-residue polypeptide: Coiled-coil domain-containing protein 91 (442 aa).

Residues 1-16 (MDDDDFGGFEAAETFD) form a GGA1-binding motif region. A disordered region spans residues 1–27 (MDDDDFGGFEAAETFDGEQGGNQAVSP). A phosphoserine mark is found at serine 43 and serine 46. Disordered stretches follow at residues 48–80 (ELIL…ADSS) and 114–134 (HGAL…SNSQ). Coiled coils occupy residues 130–210 (VSNS…GHEA), 253–318 (HAQH…MKDV), and 346–408 (ARDQ…RRLD). The tract at residues 211–414 (LSIIVDEYKA…RRLDQVTRQR (204 aa)) is homodimerization.

Homodimer. Interacts with GGA1, GGA2 and AP1G1.

It localises to the membrane. Its subcellular location is the golgi apparatus. The protein localises to the trans-Golgi network membrane. It is found in the trans-Golgi network. Its function is as follows. Involved in the regulation of membrane traffic through the trans-Golgi network (TGN). Functions in close cooperation with the GGAs in the sorting of hydrolases to lysosomes. This is Coiled-coil domain-containing protein 91 (Ccdc91) from Mus musculus (Mouse).